Consider the following 94-residue polypeptide: Translation initiation factor 1A 2 (94 aa).

The region spanning 6–80 (GRRNLRMPSD…EKANIEWRYS (75 aa)) is the S1-like domain.

This sequence belongs to the eIF-1A family.

Seems to be required for maximal rate of protein biosynthesis. Enhances ribosome dissociation into subunits and stabilizes the binding of the initiator Met-tRNA(I) to 40 S ribosomal subunits. This Haloquadratum walsbyi (strain DSM 16790 / HBSQ001) protein is Translation initiation factor 1A 2.